A 223-amino-acid polypeptide reads, in one-letter code: SCMKAAPMKEVSIRGQGSLAYPGLRTQGNLGTLGGPNDATRGLTSLADTFEHVIEELLDEQQVIQPSKENKDADLYSSRVMLSSQVPLEPPLLFLLEEYKNYLDAANMSMRVRRHSDPARRGELSVCDSTSEWVTAAEKKTAVDMSGATVTVLEKVPVPKGQLKQYFYETKCSSKGYAKEGCRGIDKRYWNSQCRTTQSYVRALTMDNKKRVGWRFIRIDTSC.

An N-terminal signal peptide occupies residues 1 to 5; sequence SCMKA. Positions 6-114 are excised as a propeptide; sequence APMKEVSIRG…AANMSMRVRR (109 aa). The N-linked (GlcNAc...) asparagine glycan is linked to Asn-107. Intrachain disulfides connect Cys-127-Cys-194 and Cys-172-Cys-223.

The protein belongs to the NGF-beta family.

It localises to the secreted. Its function is as follows. Promotes the survival of neuronal populations that are all located either in the central nervous system or directly connected to it. The sequence is that of Neurotrophic factor BDNF precursor form (BDNF) from Calabaria reinhardtii (Calabar boa).